The sequence spans 24 residues: Coenzyme PQQ synthesis protein A (24 aa).

A cross-link (pyrroloquinoline quinone (Glu-Tyr)) is located at residues Glu16–Tyr20.

Belongs to the PqqA family.

Its pathway is cofactor biosynthesis; pyrroloquinoline quinone biosynthesis. Its function is as follows. Required for coenzyme pyrroloquinoline quinone (PQQ) biosynthesis. PQQ is probably formed by cross-linking a specific glutamate to a specific tyrosine residue and excising these residues from the peptide. The chain is Coenzyme PQQ synthesis protein A from Methylococcus capsulatus (strain ATCC 33009 / NCIMB 11132 / Bath).